We begin with the raw amino-acid sequence, 25 residues long: Arginine attenuator peptide (25 aa).

This sequence belongs to the arginine attenuator peptide family.

In terms of biological role, arginine attenuator peptide (AAP) that has a regulatory role in the production of arginine-specific carbamoyl phosphate synthetase. Encoded by an upstream open reading frame (uORF) within the 5'-leader region of arginine-specific carbamoyl phosphate synthetase small chain (CPA1) mRNA, it attenuates the translation of the downstream CPA1 ORF. In the presence of high concentrations of arginine, ribosomes translating the uORF encoding AAP stall at the termination codon, resulting in reduced translation from the downstream CPA1 initiation codon. In Saccharomyces cerevisiae (strain ATCC 204508 / S288c) (Baker's yeast), this protein is Arginine attenuator peptide.